Here is a 305-residue protein sequence, read N- to C-terminus: Cysteine synthase (305 aa).

An N6-(pyridoxal phosphate)lysine modification is found at K45. Pyridoxal 5'-phosphate is bound by residues N75, 179–183 (GSGGT), and S266.

The protein belongs to the cysteine synthase/cystathionine beta-synthase family. As to quaternary structure, homodimer. The cofactor is pyridoxal 5'-phosphate.

The enzyme catalyses O-acetyl-L-serine + hydrogen sulfide = L-cysteine + acetate. It participates in amino-acid biosynthesis; L-cysteine biosynthesis; L-cysteine from L-serine: step 2/2. This chain is Cysteine synthase (cysM), found in Helicobacter pylori (strain J99 / ATCC 700824) (Campylobacter pylori J99).